The primary structure comprises 147 residues: Large ribosomal subunit protein uL16 (147 aa).

The protein belongs to the universal ribosomal protein uL16 family. As to quaternary structure, part of the 50S ribosomal subunit.

Functionally, binds 23S rRNA and is also seen to make contacts with the A and possibly P site tRNAs. The chain is Large ribosomal subunit protein uL16 from Clostridium acetobutylicum (strain ATCC 824 / DSM 792 / JCM 1419 / IAM 19013 / LMG 5710 / NBRC 13948 / NRRL B-527 / VKM B-1787 / 2291 / W).